The following is a 198-amino-acid chain: Type 1 fimbriae regulatory protein FimE (198 aa).

The Tyr recombinase domain maps to Ser-2–Glu-184. Catalysis depends on residues Arg-41, Lys-66, His-136, Arg-139, and His-162. The active-site O-(3'-phospho-DNA)-tyrosine intermediate is the Tyr-171.

This sequence belongs to the 'phage' integrase family.

Its function is as follows. FimE is one of the 2 regulatory proteins which control the phase variation of type 1 fimbriae in E.coli. These proteins mediate the periodic inversion of a 300bp DNA segment that harbors the promoter for the fimbrial structural gene, fimA. FimE switches fimA off. This Escherichia coli O6:H1 (strain CFT073 / ATCC 700928 / UPEC) protein is Type 1 fimbriae regulatory protein FimE (fimE).